We begin with the raw amino-acid sequence, 139 residues long: Non-structural protein 1 (139 aa).

The DLNP; interaction with MAP1B motif lies at Asp-136–Ser-139.

It belongs to the pneumovirus non-structural protein 1 family. As to quaternary structure, monomer. Homomultimer. Heteromultimer with NS2. Interacts with the matrix protein M. Interacts with host ELOC and CUL2; this interaction allows NS1 to form an active E3 ligase with ELOC and CUL2. Interacts with host IRF3; this interaction leads to the disrupted association of IRF3 with CREBBP and thus reduced binding of IRF3 to the IFN-beta promoter. Interacts with host MAVS; this interaction prevents MAVS binding to RIGI and inhibits signaling pathway leading to interferon production. Interacts with host MAP1B/microtubule-associated protein 1B. Interacts with host TRIM25 (via SPRY domain); this interaction suppresses RIGI ubiquitination and results in decreased interaction between RIGI and MAVS.

The protein localises to the host cytoplasm. Its subcellular location is the host mitochondrion. The protein resides in the host nucleus. In terms of biological role, plays a major role in antagonizing the type I IFN-mediated antiviral response by degrading or inhibiting multiple cellular factors required for either IFN induction or response pathways. Acts cooperatively with NS2 to repress activation and nuclear translocation of host IFN-regulatory factor IRF3. Also disrupts the association of IRF3 with CREBBP. Interacts with host mitochondrial-associated membrane (MAM) MAVS and prevents the interaction with RIGI. Interacts with TRIM25 to suppress TRIM25-mediated RIGI ubiquitination and thereby RIGI-MAVS interaction. Together with NS2, participates in the proteasomal degradation of host STAT2, IRF3, IRF7, TBK1 and RIGI through a NS-degradasome involving CUL2 and Elongin-C. The degradasome requires an intact mitochondrial MAVS. Decreases the levels of host TRAF3 and IKBKE/IKK-epsilon. As functions other than disruptions of the type I IFN-mediated antiviral signaling pathways, induces host SOCS1 and SOCS3 expression. Suppresses premature apoptosis by an NF-kappa-B-dependent, interferon-independent mechanism and thus facilitates virus growth. Additionally, NS1 may serve some inhibitory role in viral transcription and RNA replication. Suppresses proliferation and activation of host CD103+ CD8+ cytotoxic T-lymphocytes and Th17 helper T-lymphocytes. In Human respiratory syncytial virus B (strain 18537), this protein is Non-structural protein 1 (1C).